The primary structure comprises 125 residues: S-adenosylmethionine decarboxylase proenzyme (125 aa).

Catalysis depends on S71, which acts as the Schiff-base intermediate with substrate; via pyruvic acid. S71 bears the Pyruvic acid (Ser); by autocatalysis mark. Catalysis depends on H76, which acts as the Proton acceptor; for processing activity. C91 (proton donor; for catalytic activity) is an active-site residue.

This sequence belongs to the prokaryotic AdoMetDC family. Type 1 subfamily. Heterotetramer of two alpha and two beta chains arranged as a dimer of alpha/beta heterodimers. Pyruvate is required as a cofactor. In terms of processing, is synthesized initially as an inactive proenzyme. Formation of the active enzyme involves a self-maturation process in which the active site pyruvoyl group is generated from an internal serine residue via an autocatalytic post-translational modification. Two non-identical subunits are generated from the proenzyme in this reaction, and the pyruvate is formed at the N-terminus of the alpha chain, which is derived from the carboxyl end of the proenzyme. The post-translation cleavage follows an unusual pathway, termed non-hydrolytic serinolysis, in which the side chain hydroxyl group of the serine supplies its oxygen atom to form the C-terminus of the beta chain, while the remainder of the serine residue undergoes an oxidative deamination to produce ammonia and the pyruvoyl group blocking the N-terminus of the alpha chain.

The enzyme catalyses S-adenosyl-L-methionine + H(+) = S-adenosyl 3-(methylsulfanyl)propylamine + CO2. The protein operates within amine and polyamine biosynthesis; S-adenosylmethioninamine biosynthesis; S-adenosylmethioninamine from S-adenosyl-L-methionine: step 1/1. Functionally, catalyzes the decarboxylation of S-adenosylmethionine to S-adenosylmethioninamine (dcAdoMet), the propylamine donor required for the synthesis of the polyamines spermine and spermidine from the diamine putrescine. The chain is S-adenosylmethionine decarboxylase proenzyme from Pyrobaculum arsenaticum (strain DSM 13514 / JCM 11321 / PZ6).